The following is a 295-amino-acid chain: Cop9 signalosome-interactor 1 (295 aa).

Component of a COP9 signalosome-like (CSN) complex, composed of RRI1/CSN5, CSN9, RRI2/CSN10, PCI8/CSN11, CSN12 and CSI1. In the complex, it probably interacts directly with CSN9 and CSN12. Interacts also with RPN5.

It localises to the cytoplasm. Its subcellular location is the nucleus. Functionally, component of the COP9 signalosome (CSN) complex that acts as an regulator of the ubiquitin (Ubl) conjugation pathway by mediating the deneddylation of the cullin subunit of SCF-type E3 ubiquitin-protein ligase complexes The CSN complex is involved in the regulation of the mating pheromone response. This is Cop9 signalosome-interactor 1 (CSI1) from Saccharomyces cerevisiae (strain ATCC 204508 / S288c) (Baker's yeast).